The following is an 887-amino-acid chain: Multiple RNA-binding domain-containing protein 1 (887 aa).

The 93-residue stretch at 2-94 (SRIIVKGLPV…SKIEVSMAKS (93 aa)) folds into the RRM 1 domain. Disordered stretches follow at residues 121–143 (KLLQEENRKKKKVDENKHSNIDD), 203–276 (KEEN…RNLA), and 297–336 (SEAETREKSSSYATEQNESLDTKKEEQPERAVPQKTDEEL). Residues Ser220 and Ser264 each carry the phosphoserine modification. Residues 264–276 (SDEKENEKRRNLA) are compositionally biased toward basic and acidic residues. Residues 306–315 (SSYATEQNES) are compositionally biased toward polar residues. A compositionally biased stretch (basic and acidic residues) spans 316-325 (LDTKKEEQPE). RRM domains follow at residues 345–423 (GRLF…PGEE), 532–604 (KVIL…RGPK), 663–746 (VSIF…LSHR), and 763–840 (GKII…YAEE). Positions 864–887 (EMAALRNGGGRKKLDVDDEENEGF) are disordered.

It belongs to the RRM MRD1 family. Interacts with NOP1. Binds to the 35S pre-rRNA and the U3 snoRNA.

Its subcellular location is the nucleus. Involved in pre-rRNA processing. Required for maintaining steady-state levels of 40S ribosomal subunit. Required for the initial processing of pre-rRNA at the A0 to A2 sites, leading to the processing of the 23S pre-rRNA intermediate to the 18S rRNA. The polypeptide is Multiple RNA-binding domain-containing protein 1 (MRD1) (Saccharomyces cerevisiae (strain ATCC 204508 / S288c) (Baker's yeast)).